Reading from the N-terminus, the 367-residue chain is Probable neutral protease 2 homolog MCYG_00239 (367 aa).

Positions 1 to 19 (MQVLVALAALSSLAAPVVG) are cleaved as a signal peptide. Positions 20-190 (FSIPRGVPVS…DGPFTRIDKR (171 aa)) are excised as a propeptide. 3 disulfides stabilise this stretch: Cys198/Cys268, Cys275/Cys293, and Cys307/Cys367. A Zn(2+)-binding site is contributed by His318. Residue Glu319 is part of the active site. 2 residues coordinate Zn(2+): His322 and Asp333.

It belongs to the peptidase M35 family. Zn(2+) serves as cofactor.

The protein localises to the secreted. It catalyses the reaction Preferential cleavage of bonds with hydrophobic residues in P1'. Also 3-Asn-|-Gln-4 and 8-Gly-|-Ser-9 bonds in insulin B chain.. Its function is as follows. Probable secreted metalloprotease that shows high activities on basic nuclear substrates such as histone and protamine. May be involved in virulence. The polypeptide is Probable neutral protease 2 homolog MCYG_00239 (Arthroderma otae (strain ATCC MYA-4605 / CBS 113480) (Microsporum canis)).